The sequence spans 392 residues: Protein FAM53C (392 aa).

Residue M1 is modified to N-acetylmethionine. The segment at 78 to 119 (LRPPSRGNSPKEQPFSQVLRPEPPDPEKLPVPPAPPSKRHCR) is disordered. A compositionally biased stretch (polar residues) spans 83 to 93 (RGNSPKEQPFS). 6 positions are modified to phosphoserine: S122, S162, S232, S234, S255, and S273. 2 disordered regions span residues 141 to 167 (LWTP…PKRV) and 204 to 294 (RPCA…EDPR). The span at 241–256 (ASRFLPSARSSPASSP) shows a compositional bias: low complexity. The segment covering 278-294 (LDARKTGVKRRHEEDPR) has biased composition (basic and acidic residues). At S299 the chain carries Phosphoserine. Residues 341–364 (ASCSPTGGSSQVLSESEEEEEGAV) are disordered.

It belongs to the FAM53 family.

This is Protein FAM53C from Homo sapiens (Human).